Reading from the N-terminus, the 74-residue chain is Benzylsuccinate synthase beta subunit (74 aa).

Heterohexamer composed of 2 alpha subunits, 2 beta subunits and 2 gamma subunits.

The enzyme catalyses toluene + fumarate = 2-benzylsuccinate. It functions in the pathway xenobiotic degradation; toluene degradation. Activated by the benzylsuccinate synthase activating enzyme BssD. Rapidly inactivated by oxygen. Catalyzes the addition of fumarate to the methyl group of toluene, leading to the formation of benzylsuccinate. The polypeptide is Benzylsuccinate synthase beta subunit (bssB) (Thauera aromatica).